The chain runs to 467 residues: Glutamate--tRNA ligase (467 aa).

The 'HIGH' region signature appears at 9 to 19 (PSPTGNLHIGS). Positions 237 to 241 (KISKR) match the 'KMSKS' region motif. Lys240 is a binding site for ATP.

This sequence belongs to the class-I aminoacyl-tRNA synthetase family. Glutamate--tRNA ligase type 1 subfamily. In terms of assembly, monomer.

It localises to the cytoplasm. It carries out the reaction tRNA(Glu) + L-glutamate + ATP = L-glutamyl-tRNA(Glu) + AMP + diphosphate. Its function is as follows. Catalyzes the attachment of glutamate to tRNA(Glu) in a two-step reaction: glutamate is first activated by ATP to form Glu-AMP and then transferred to the acceptor end of tRNA(Glu). The protein is Glutamate--tRNA ligase of Buchnera aphidicola subsp. Acyrthosiphon pisum (strain APS) (Acyrthosiphon pisum symbiotic bacterium).